The sequence spans 436 residues: Gamma-glutamyl phosphate reductase (436 aa).

This sequence belongs to the gamma-glutamyl phosphate reductase family.

It is found in the cytoplasm. The enzyme catalyses L-glutamate 5-semialdehyde + phosphate + NADP(+) = L-glutamyl 5-phosphate + NADPH + H(+). It participates in amino-acid biosynthesis; L-proline biosynthesis; L-glutamate 5-semialdehyde from L-glutamate: step 2/2. Catalyzes the NADPH-dependent reduction of L-glutamate 5-phosphate into L-glutamate 5-semialdehyde and phosphate. The product spontaneously undergoes cyclization to form 1-pyrroline-5-carboxylate. The chain is Gamma-glutamyl phosphate reductase from Prochlorococcus marinus (strain MIT 9312).